Consider the following 360-residue polypeptide: Probable cinnamyl alcohol dehydrogenase 1 (360 aa).

Position 47 (Cys47) interacts with Zn(2+). An NADP(+)-binding site is contributed by Thr49. Residues His69, Glu70, Cys100, Cys103, Cys106, Cys114, and Cys163 each contribute to the Zn(2+) site. NADP(+) contacts are provided by residues Thr167, 189–194 (GLGGVG), 212–217 (SSSDKK), Thr252, Gly276, and 299–301 (SFI).

This sequence belongs to the zinc-containing alcohol dehydrogenase family. In terms of assembly, homodimer. Zn(2+) is required as a cofactor.

It carries out the reaction (E)-cinnamyl alcohol + NADP(+) = (E)-cinnamaldehyde + NADPH + H(+). The enzyme catalyses (E)-coniferol + NADP(+) = (E)-coniferaldehyde + NADPH + H(+). It catalyses the reaction (E)-sinapyl alcohol + NADP(+) = (E)-sinapaldehyde + NADPH + H(+). The catalysed reaction is (E)-4-coumaroyl alcohol + NADP(+) = (E)-4-coumaraldehyde + NADPH + H(+). It carries out the reaction (E)-caffeyl alcohol + NADP(+) = (E)-caffeyl aldehyde + NADPH + H(+). The protein operates within aromatic compound metabolism; phenylpropanoid biosynthesis. Functionally, involved in lignin biosynthesis. Catalyzes the final step specific for the production of lignin monomers. Catalyzes the NADPH-dependent reduction of coniferaldehyde, 5-hydroxyconiferaldehyde, sinapaldehyde, 4-coumaraldehyde and caffeyl aldehyde to their respective alcohols. This Aralia cordata (Udo) protein is Probable cinnamyl alcohol dehydrogenase 1 (CAD1).